The following is an 815-amino-acid chain: (-)-kolavenyl diphosphate synthase TPS10, chloroplastic (815 aa).

The transit peptide at 1–50 (MFMSSSSSSHARRPQLSSFSYLHPPLPFPGLSFSSTRDKRVNFDSTRIIS) directs the protein to the chloroplast. Lysine 247 contacts substrate. Residues aspartate 379 and aspartate 381 each coordinate Mg(2+). The short motif at 379 to 382 (DIDD) is the DXDD motif element. Lysine 465 contacts substrate.

Belongs to the terpene synthase family. Tpsc subfamily. Mg(2+) is required as a cofactor.

Its subcellular location is the plastid. The protein localises to the chloroplast. It catalyses the reaction (2E,6E,10E)-geranylgeranyl diphosphate = (-)-kolavenyl diphosphate. Its activity is regulated as follows. Inhibited by high concentrations of magnesium. Diterpene synthase that catalyzes the formation of (-)-kolavenyl diphosphate from geranylgeranyl diphosphate (GGPP). The sequence is that of (-)-kolavenyl diphosphate synthase TPS10, chloroplastic from Tripterygium wilfordii (Thunder God vine).